A 332-amino-acid chain; its full sequence is MKTLGEFIVEKQHEFSHATGELTALLSAIKLGAKIIHRDINKAGLVDILGASGAENVQGEVQQKLDLFANEKLKAALKARDIVAGIASEEEDEIVVFEGCEHAKYVVLMDPLDGSSNIDVNVSVGTIFSIYRRVTPVGTPVTEEDFLQPGNKQVAAGYVVYGSSTMLVYTTGCGVHAFTYDPSLGVFCLCQERMRFPEKGKTYSINEGNYIKFPNGVKKYIKFCQEEDKSTNRPYTSRYIGSLVADFHRNLLKGGIYLYPSTASHPDGKLRLLYECNPMAFLAEQAGGKASDGKERILDIIPETLHQRRSFFVGNDHMVEDVERFIREFPDA.

The Mg(2+) site is built by E89, D110, L112, and D113. Residues 113–116 (DGSS), N206, Y239, 257–259 (YLY), and K269 each bind substrate. E275 contacts Mg(2+).

Belongs to the FBPase class 1 family. As to quaternary structure, homotetramer. Mg(2+) is required as a cofactor.

The protein localises to the cytoplasm. The enzyme catalyses beta-D-fructose 1,6-bisphosphate + H2O = beta-D-fructose 6-phosphate + phosphate. Its pathway is carbohydrate biosynthesis; gluconeogenesis. The polypeptide is Fructose-1,6-bisphosphatase class 1 (Escherichia coli (strain ATCC 8739 / DSM 1576 / NBRC 3972 / NCIMB 8545 / WDCM 00012 / Crooks)).